A 184-amino-acid polypeptide reads, in one-letter code: Thymidine kinase (184 aa).

ATP contacts are provided by residues 9-16 and 82-85; these read AAMNSGKS and DEAQ. Glu-83 serves as the catalytic Proton acceptor. Zn(2+) is bound by residues Cys-140, Cys-142, Cys-177, and Cys-180.

This sequence belongs to the thymidine kinase family. In terms of assembly, homotetramer.

Its subcellular location is the cytoplasm. It carries out the reaction thymidine + ATP = dTMP + ADP + H(+). The sequence is that of Thymidine kinase from Chromobacterium violaceum (strain ATCC 12472 / DSM 30191 / JCM 1249 / CCUG 213 / NBRC 12614 / NCIMB 9131 / NCTC 9757 / MK).